A 28-amino-acid polypeptide reads, in one-letter code: Sarcolamban A (28 aa).

The helical transmembrane segment at 7-27 threads the bilayer; that stretch reads LFTTFGILAILLFFLYLIYAV.

As to quaternary structure, interacts with SERCA. In terms of tissue distribution, strongly expressed in embryonic and larval somatic muscles and postembryonic heart.

It is found in the sarcoplasmic reticulum membrane. Its subcellular location is the cell membrane. The protein resides in the sarcolemma. The protein localises to the T-tubule. Functionally, plays an essential role in the regulation of calcium transport at the sarcoplasmic reticulum (SR), which is secondarily required for regular muscle contraction. This is Sarcolamban A from Drosophila melanogaster (Fruit fly).